The primary structure comprises 305 residues: Cytochrome c biogenesis protein CcsA (305 aa).

The next 8 helical transmembrane spans lie at 11–31 (ANAS…KAIF), 36–56 (ILQL…ALLL), 75–95 (LMFL…YIQI), 97–117 (FIGF…TFFL), 142–162 (IMMA…AFLF), 212–232 (TIGI…VWAN), 239–259 (WSWD…AIYL), and 273–293 (AIVA…VNLL).

This sequence belongs to the CcmF/CycK/Ccl1/NrfE/CcsA family. May interact with Ccs1.

The protein resides in the plastid. It is found in the chloroplast thylakoid membrane. In terms of biological role, required during biogenesis of c-type cytochromes (cytochrome c6 and cytochrome f) at the step of heme attachment. This is Cytochrome c biogenesis protein CcsA from Mesostigma viride (Green alga).